We begin with the raw amino-acid sequence, 892 residues long: Iodate reductase subunit IdrA (892 aa).

Cys27, Cys30, and Cys34 together coordinate [3Fe-4S] cluster. The span at 431–442 shows a compositional bias: gly residues; sequence RGGGHQRGGLSA. The interval 431–452 is disordered; it reads RGGGHQRGGLSAGGNSEWLSPE.

It belongs to the prokaryotic molybdopterin-containing oxidoreductase family. As to quaternary structure, the iodate reductase (Idr) complex is composed of a molybdopterin-dependent iodate reductase (IdrA and IdrB subunits) and two associated peroxidases (IdrP1 and IdrP2). [3Fe-4S] cluster is required as a cofactor. Mo-bis(molybdopterin guanine dinucleotide) serves as cofactor.

Its subcellular location is the periplasm. Involved in iodate respiration. Probably catalyzes the reduction of iodate (IO(3)(-)) to hypoiodous acid (HIO) and H(2)O(2), using a reduced cytochrome c as the electron donor. The polypeptide is Iodate reductase subunit IdrA (Pseudomonas sp. (strain SCT)).